The following is a 552-amino-acid chain: Putative pentatricopeptide repeat-containing protein At1g64310 (552 aa).

PPR repeat units follow at residues 39 to 69 (DPYF…FPER), 70 to 104 (SVFL…DTRP), 105 to 139 (DNFT…GLGF), 140 to 170 (DQIC…IPDP), 171 to 205 (DLAL…GHQP), 206 to 240 (NCYT…NLDS), 241 to 271 (HSYV…ISEP), 272 to 306 (DLVA…GKKP), 307 to 341 (DCVL…GLEL), 342 to 372 (DIKV…IPEK), 373 to 407 (NIVS…GLIP), 408 to 438 (DEIT…MKSE), and 444 to 474 (QTEH…LQKP). A type E motif; degenerate region spans residues 479–552 (ILGALLSCCE…GGKLPGISWF (74 aa)).

The protein belongs to the PPR family. PCMP-E subfamily.

The protein is Putative pentatricopeptide repeat-containing protein At1g64310 (PCMP-E65) of Arabidopsis thaliana (Mouse-ear cress).